The primary structure comprises 677 residues: Methionine--tRNA ligase (677 aa).

A 'HIGH' region motif is present at residues 15–25 (PYANGSIHLGH). Cys-146, Cys-149, Cys-159, and Cys-162 together coordinate Zn(2+). Positions 333 to 337 (KMSKS) match the 'KMSKS' region motif. Lys-336 is an ATP binding site. One can recognise a tRNA-binding domain in the interval 575-677 (DFAKIDLRVA…DGAKPGQQVK (103 aa)).

The protein belongs to the class-I aminoacyl-tRNA synthetase family. MetG type 1 subfamily. As to quaternary structure, homodimer. Zn(2+) serves as cofactor.

Its subcellular location is the cytoplasm. The enzyme catalyses tRNA(Met) + L-methionine + ATP = L-methionyl-tRNA(Met) + AMP + diphosphate. In terms of biological role, is required not only for elongation of protein synthesis but also for the initiation of all mRNA translation through initiator tRNA(fMet) aminoacylation. This Salmonella paratyphi A (strain AKU_12601) protein is Methionine--tRNA ligase.